Reading from the N-terminus, the 239-residue chain is Ribonuclease PH (239 aa).

Phosphate is bound by residues Arg86 and Gly124–Arg126.

It belongs to the RNase PH family. As to quaternary structure, homohexameric ring arranged as a trimer of dimers.

The catalysed reaction is tRNA(n+1) + phosphate = tRNA(n) + a ribonucleoside 5'-diphosphate. In terms of biological role, phosphorolytic 3'-5' exoribonuclease that plays an important role in tRNA 3'-end maturation. Removes nucleotide residues following the 3'-CCA terminus of tRNAs; can also add nucleotides to the ends of RNA molecules by using nucleoside diphosphates as substrates, but this may not be physiologically important. Probably plays a role in initiation of 16S rRNA degradation (leading to ribosome degradation) during starvation. The sequence is that of Ribonuclease PH from Rhizobium leguminosarum bv. trifolii (strain WSM2304).